Reading from the N-terminus, the 228-residue chain is Phosphoglycolate phosphatase (228 aa).

Aspartate 9 functions as the Nucleophile in the catalytic mechanism. Mg(2+)-binding residues include aspartate 9 and aspartate 11. Lysine 151 contacts substrate. Mg(2+) contacts are provided by aspartate 174 and aspartate 178.

Belongs to the archaeal SPP-like hydrolase family. Requires Mg(2+) as cofactor.

It carries out the reaction 2-phosphoglycolate + H2O = glycolate + phosphate. In terms of biological role, catalyzes the dephosphorylation of 2-phosphoglycolate. The protein is Phosphoglycolate phosphatase of Pyrobaculum islandicum (strain DSM 4184 / JCM 9189 / GEO3).